Here is a 699-residue protein sequence, read N- to C-terminus: 4-alpha-glucanotransferase (699 aa).

It belongs to the disproportionating enzyme family.

The protein resides in the cytoplasm. The enzyme catalyses Transfers a segment of a (1-&gt;4)-alpha-D-glucan to a new position in an acceptor, which may be glucose or a (1-&gt;4)-alpha-D-glucan.. In Haemophilus influenzae (strain ATCC 51907 / DSM 11121 / KW20 / Rd), this protein is 4-alpha-glucanotransferase (malQ).